The primary structure comprises 2157 residues: Mediator of RNA polymerase II transcription subunit 12-like protein (2157 aa).

Residues 1–31 (MAAFGLLSYEQRPLKRPRLGPPDVYPQDPKQ) are disordered. At Thr-462 the chain carries Phosphothreonine. Residues 1437–1456 (ELEKGQHLGSSSKKERDRQK) are compositionally biased toward basic and acidic residues. Disordered regions lie at residues 1437 to 1461 (ELEKGQHLGSSSKKERDRQKQKSMS), 1724 to 1807 (RSYY…SQMT), and 2040 to 2157 (IDAV…PSHF). The span at 1771-1780 (TKGRKRKTKS) shows a compositional bias: basic residues. Composition is skewed to low complexity over residues 2063–2076 (PRQQQVRQQQRLLQ), 2083–2101 (QQPQQAPQPQQPSQTQSQA), and 2116–2136 (RQGLQQTQQQQQTAALVRQLQ). The segment covering 2137–2148 (KQLSSNQPQQGV) has biased composition (polar residues).

The protein belongs to the Mediator complex subunit 12 family. May be a component of the Mediator complex, which is known to be composed of MED1, MED4, MED6, MED7, MED8, MED9, MED10, MED11, MED12, MED13, MED13L, MED14, MED15, MED16, MED17, MED18, MED19, MED20, MED21, MED22, MED23, MED24, MED25, MED26, MED27, MED29, MED30, MED31, CCNC, CDK8 and CDC2L6/CDK11. The MED12, MED13, CCNC and CDK8 subunits form a distinct module termed the CDK8 module. Mediator containing the CDK8 module is less active than Mediator lacking this module in supporting transcriptional activation. Individual preparations of the Mediator complex lacking one or more distinct subunits have been variously termed ARC, CRSP, DRIP, PC2, SMCC and TRAP.

The protein resides in the nucleus. In terms of biological role, may be a component of the Mediator complex, a coactivator involved in the regulated transcription of nearly all RNA polymerase II-dependent genes. Mediator functions as a bridge to convey information from gene-specific regulatory proteins to the basal RNA polymerase II transcription machinery. Mediator is recruited to promoters by direct interactions with regulatory proteins and serves as a scaffold for the assembly of a functional preinitiation complex with RNA polymerase II and the general transcription factors. This chain is Mediator of RNA polymerase II transcription subunit 12-like protein (Med12l), found in Mus musculus (Mouse).